Consider the following 1025-residue polypeptide: MKFFALFIYRPVATILLSVAITLCGILGFRMLPVAPLPQVDFPVIMVSASLPGASPETMASSVATPLERSLGRIAGVSEMTSSSSLGSTRIILQFDFDRDINGAARDVQAAINAAQSLLPSGMPSRPTYRKANPSDAPIMILTLTSDTYSQGELYDFASTQLAPTISQIDGVGDVDVGGSSLPAVRVGLNPQALFNQGVSLDDVRTAISNANVRKPQGALEDGTHRWQIQTNDELKTAAEYQPLIIHYNNGGAVRLGDVATVTDSVQDVRNAGMTNAKPAILLMIRKLPEANIIQTVDSIRAKLPELQETIPAAIDLQIAQDRSPTIRASLEEVEQTLIISVALVILVVFLFLRSGRATIIPAVAVPVSLIGTFAAMYLCGFSLNNLSLMALTIATGFVVDDAIVVLENIARHLEAGMKPLQAALQGTREVGFTVLSMSLSLVAVFLPLLLMGGLPGRLLREFAVTLSVAIGISLLVSLTLTPMMCGWMLKASKPREQKRLRGFGRMLVALQQGYGKSLKWGLNHTRLVGVVLLGTIALNIWLYISIPKTFFPEQDTGVLMGGIQADQSISFQAMRGKLQDFMKIIRDDPAVDNVTGFTGGSRVNSGMMFITLKPHDERSETAQQIIDRLRVKLAKEPGANLFLMAVQDIRVGGRQSNASYQYTLLSDDLAALREWEPKIRKKLATLPELADVNSDQQDNGAEMNLVYDRDTMARLGIDVQAANSLLNNAFGQRQISTIYQPMNQYKVVMEVDPRYTQDISALEKMFVINNEGKAIPLSYFAKWQPANAPLSVNHQGLSAASTISFNLPTGKSLSDASAAIDRAMTQLGVPSTVRGSFAGTAQVFQETMNSQVILIIAAIATVYIVLGILYESYVHPLTILSTLPSAGVGALLALELFNAPFSLIALIGIMLLIGIVKKNAIMMVDFALEAQRHGNLTPQEAIFQACLLRFRPIMMTTLAALFGALPLVLSGGDGSELRQPLGITIVGGLVMSQLLTLYTTPVVYLFFDRLRLRFSRKPKQTVTE.

Helical transmembrane passes span 3–23 (FFAL…AITL), 333–353 (EVEQ…FLFL), 360–380 (IIPA…MYLC), 387–407 (LSLM…IVVL), 431–451 (VGFT…PLLL), 463–483 (FAVT…TLTP), 528–548 (LVGV…ISIP), 853–873 (VILI…LYES), 875–895 (VHPL…LLAL), 897–917 (LFNA…IGIV), 953–973 (PIMM…LSGG), and 984–1004 (ITIV…TPVV).

This sequence belongs to the resistance-nodulation-cell division (RND) (TC 2.A.6) family. MdtC subfamily. In terms of assembly, part of a tripartite efflux system composed of MdtA, MdtB and MdtC. MdtC forms a heteromultimer with MdtB.

It is found in the cell inner membrane. Its function is as follows. The MdtABC tripartite complex confers resistance against novobiocin and deoxycholate. The sequence is that of Multidrug resistance protein MdtC from Escherichia coli O17:K52:H18 (strain UMN026 / ExPEC).